Reading from the N-terminus, the 284-residue chain is MKVECASNIGFCFGVHRAINILEKTASERGGVETLGALVHNQQVLNRLSGMGVRVVKNIDDISGRTVAISSHGVGPAVLAELKSKGLEIVDTTCPFVKRAQVAAKRFHDAGFFTVIYGDVNHPEVKGILGWAGGNGLATLNPQGLDDIPDLSRYIGVLSQTTQIPTGFTSFVKNVIDQALVKDAEIRIADTLCHDIRDRQAAALELAGRVDLMLVIGGHNSANTRHLLDLCKTVSNTHLIETASELQTDWLKGVSRIGITSGASTDETTISEVCSYLDRLSAGA.

C12 contacts [4Fe-4S] cluster. 2 residues coordinate (2E)-4-hydroxy-3-methylbut-2-enyl diphosphate: H40 and H72. Residues H40 and H72 each coordinate dimethylallyl diphosphate. H40 and H72 together coordinate isopentenyl diphosphate. C94 is a [4Fe-4S] cluster binding site. H122 is a (2E)-4-hydroxy-3-methylbut-2-enyl diphosphate binding site. Dimethylallyl diphosphate is bound at residue H122. H122 contacts isopentenyl diphosphate. E124 functions as the Proton donor in the catalytic mechanism. T161 provides a ligand contact to (2E)-4-hydroxy-3-methylbut-2-enyl diphosphate. C193 serves as a coordination point for [4Fe-4S] cluster. Residues S221, N223, and S264 each coordinate (2E)-4-hydroxy-3-methylbut-2-enyl diphosphate. Dimethylallyl diphosphate is bound by residues S221, N223, and S264. Isopentenyl diphosphate is bound by residues S221, N223, and S264.

Belongs to the IspH family. The cofactor is [4Fe-4S] cluster.

The catalysed reaction is isopentenyl diphosphate + 2 oxidized [2Fe-2S]-[ferredoxin] + H2O = (2E)-4-hydroxy-3-methylbut-2-enyl diphosphate + 2 reduced [2Fe-2S]-[ferredoxin] + 2 H(+). The enzyme catalyses dimethylallyl diphosphate + 2 oxidized [2Fe-2S]-[ferredoxin] + H2O = (2E)-4-hydroxy-3-methylbut-2-enyl diphosphate + 2 reduced [2Fe-2S]-[ferredoxin] + 2 H(+). It functions in the pathway isoprenoid biosynthesis; dimethylallyl diphosphate biosynthesis; dimethylallyl diphosphate from (2E)-4-hydroxy-3-methylbutenyl diphosphate: step 1/1. The protein operates within isoprenoid biosynthesis; isopentenyl diphosphate biosynthesis via DXP pathway; isopentenyl diphosphate from 1-deoxy-D-xylulose 5-phosphate: step 6/6. Catalyzes the conversion of 1-hydroxy-2-methyl-2-(E)-butenyl 4-diphosphate (HMBPP) into a mixture of isopentenyl diphosphate (IPP) and dimethylallyl diphosphate (DMAPP). Acts in the terminal step of the DOXP/MEP pathway for isoprenoid precursor biosynthesis. The chain is 4-hydroxy-3-methylbut-2-enyl diphosphate reductase from Dehalococcoides mccartyi (strain ATCC BAA-2100 / JCM 16839 / KCTC 5957 / BAV1).